The following is a 2210-amino-acid chain: Filamin-A (2210 aa).

Calponin-homology (CH) domains follow at residues 15–120 and 139–242; these read KIQQ…LHYS and HTPK…NSKL. Filamin repeat units follow at residues 249–347, 349–447, 448–544, 545–635, 638–734, 735–831, 832–929, 930–1022, 1023–1121, 1122–1217, 1218–1312, 1322–1423, 1424–1515, 1516–1603, 1606–1698, 1699–1796, 1799–1891, 1893–1986, 1988–2079, and 2116–2210; these read RPKT…PVKV, GHAG…PVKV, APLS…EVKV, GPKK…IAQI, RTDF…RVYV, GVPV…VVVE, QTVD…VVNV, KSGC…RVLV, EETV…VMTV, FPKS…KLEA, FPTG…SIKA, SEYI…KFHV, DSIT…FAKI, TGEG…KVTV, REVG…TVKV, AGEG…QFTV, LRDS…KVYV, PDAG…RIKV, KDVA…KVNA, and TFKS…QIDV.

Belongs to the filamin family. As to quaternary structure, interacts with Ten-m. As to expression, germline-specific in females (at protein level). Expressed in ovary.

It is found in the cytoplasm. It localises to the cytoskeleton. The protein localises to the cell membrane. Its function is as follows. Involved in the germline ring canal formation. May tether actin microfilament within the ovarian ring canal to the cell membrane. Contributes to actin microfilaments organization. The chain is Filamin-A (cher) from Drosophila melanogaster (Fruit fly).